A 303-amino-acid chain; its full sequence is Putative AraC-like transcription regulator (303 aa).

An HTH araC/xylS-type domain is found at 202-300 (ASALTFLHRD…GMNPGDYRKH (99 aa)). 2 consecutive DNA-binding regions (H-T-H motif) follow at residues 219–240 (AELA…KATV) and 267–290 (LAAI…KRVL).

This is Putative AraC-like transcription regulator from Streptomyces antibioticus.